The primary structure comprises 280 residues: Vitamin B12-binding protein (280 aa).

The N-terminal stretch at 1–27 (MMPLGLFPLPRAAAVLLISLLTLPAQA) is a signal peptide. The 248-residue stretch at 30-277 (RVISLSPSTT…QMASIPTPVA (248 aa)) folds into the Fe/B12 periplasmic-binding domain. Y57 is a cyanocob(III)alamin binding site. A disulfide bridge links C190 with C266.

This sequence belongs to the BtuF family. In terms of assembly, the complex is composed of two ATP-binding proteins (BtuD), two transmembrane proteins (BtuC) and a solute-binding protein (BtuF).

It localises to the periplasm. Its function is as follows. Part of the ABC transporter complex BtuCDF involved in vitamin B12 import. Binds vitamin B12 and delivers it to the periplasmic surface of BtuC. This Yersinia pestis bv. Antiqua (strain Antiqua) protein is Vitamin B12-binding protein.